Here is a 153-residue protein sequence, read N- to C-terminus: ATP synthase subunit b' (153 aa).

The chain crosses the membrane as a helical span at residues Leu-23–Phe-40.

Belongs to the ATPase B chain family. In terms of assembly, F-type ATPases have 2 components, F(1) - the catalytic core - and F(0) - the membrane proton channel. F(1) has five subunits: alpha(3), beta(3), gamma(1), delta(1), epsilon(1). F(0) has four main subunits: a(1), b(1), b'(1) and c(10-14). The alpha and beta chains form an alternating ring which encloses part of the gamma chain. F(1) is attached to F(0) by a central stalk formed by the gamma and epsilon chains, while a peripheral stalk is formed by the delta, b and b' chains.

It localises to the cellular thylakoid membrane. Its function is as follows. F(1)F(0) ATP synthase produces ATP from ADP in the presence of a proton or sodium gradient. F-type ATPases consist of two structural domains, F(1) containing the extramembraneous catalytic core and F(0) containing the membrane proton channel, linked together by a central stalk and a peripheral stalk. During catalysis, ATP synthesis in the catalytic domain of F(1) is coupled via a rotary mechanism of the central stalk subunits to proton translocation. Functionally, component of the F(0) channel, it forms part of the peripheral stalk, linking F(1) to F(0). The b'-subunit is a diverged and duplicated form of b found in plants and photosynthetic bacteria. The sequence is that of ATP synthase subunit b' from Prochlorococcus marinus (strain MIT 9215).